The following is a 64-amino-acid chain: Large ribosomal subunit protein bL35 (64 aa).

Residues 1-27 (MPKMKTKSGAKKRFKPTASGFKHKHAF) are disordered.

The protein belongs to the bacterial ribosomal protein bL35 family.

This is Large ribosomal subunit protein bL35 from Azotobacter vinelandii (strain DJ / ATCC BAA-1303).